Reading from the N-terminus, the 201-residue chain is MSKVLVLKSSILAGYSQSNQLSDYFVEQWSEKHSADEITVRDLAANPIPVLDGELVGALRPSDAPLTPRQQEALALSDELIAELKAHDVIVIAAPMYNFNISTQLKNYFDLVARAGVTFRYTENGPEGLVTGKKAIVITSRGGIHKDGPTDLVTPYLSTFLGFIGITDVKFVFAEGIAYGPEMAAKAQSDAKAAIDSIVAA.

FMN is bound by residues Ser-10, 16–18, 96–99, and 140–143; these read SQS, MYNF, and SRGG.

This sequence belongs to the azoreductase type 1 family. In terms of assembly, homodimer. It depends on FMN as a cofactor.

It catalyses the reaction 2 a quinone + NADH + H(+) = 2 a 1,4-benzosemiquinone + NAD(+). The enzyme catalyses N,N-dimethyl-1,4-phenylenediamine + anthranilate + 2 NAD(+) = 2-(4-dimethylaminophenyl)diazenylbenzoate + 2 NADH + 2 H(+). Quinone reductase that provides resistance to thiol-specific stress caused by electrophilic quinones. In terms of biological role, also exhibits azoreductase activity. Catalyzes the reductive cleavage of the azo bond in aromatic azo compounds to the corresponding amines. The protein is FMN-dependent NADH:quinone oxidoreductase of Shigella flexneri serotype 5b (strain 8401).